Reading from the N-terminus, the 55-residue chain is Large ribosomal subunit protein bL32 (55 aa).

Residues 1–19 (MAVPKRRMSRANTHTRRSQ) show a composition bias toward basic residues. The segment at 1–21 (MAVPKRRMSRANTHTRRSQWK) is disordered.

Belongs to the bacterial ribosomal protein bL32 family.

This is Large ribosomal subunit protein bL32 from Corynebacterium kroppenstedtii (strain DSM 44385 / JCM 11950 / CIP 105744 / CCUG 35717).